Consider the following 108-residue polypeptide: uncharacterized protein (108 aa).

Residues 75-94 (TPQVSSFPSSTTSLSHSCTT) form a disordered region. A compositionally biased stretch (low complexity) spans 79-94 (SSFPSSTTSLSHSCTT).

This is an uncharacterized protein from Homo sapiens (Human).